The chain runs to 728 residues: MSSRIDRDVINALIAGHFADPFSVLGMHQTQAGLEVRALLPDATDVWVIEPKTGRKVGKLECLDARGFFCGVLPRRKNFFRYQLAVTWHGQQNLIDDPYRFGPLIQEMDAWLLSEGTHLRPYETLGAHADTMDGVTGTRFSVWAPNARRVSVVGQFNYWDGRRHPMRLRKESGIWELFIPGAHNGQLYKFELLDANGNLRIKADPYAFEAQMRPETASMICGLPEKVTPSEERQKANQFDAPISIYEVHLGSWRRHTDNNFWLSYRELADQLVPYAKWMGFTHLELLPVNEHPFDGSWGYQPTGLYAPTRRFGTRDDFRYFINAAHAAGLNVILDWVPGHFPSDEFSLAEFDGTHLYEHSDPREGYHQDWNTLIYNYGRREVSNYLVGNALYWMERFGIDALRVDAVASMIYRDYSRKEGEWIPNEFGGRENLEAIEFLRNTNRIIGEQVPGAVSMAEESTDFSGVTRPPETGGLGFWYKWNLGWMHDTLDYMKLDPVYRQYHHDKLTFGMLYNHTENFVLPLSHDEVVHGKKSILDRMPGDAWQKFANLRAYYGWMWAFPGKKLLFMGNEFAQGREWNHDASLDWHLLEGGDNWHHGVQRLVRDLNHTYRHHKALHELDFDAYGFEWLVVDDNERSVLIFVRRDKAGNEIIVASNFTPVPRHDYRFGINQPGRWREILNTDSMHYHGSNTGNGGVVHSDEIESHGRQHSLNLTLPPLATIWLMREGE.

Asp405 serves as the catalytic Nucleophile. Glu458 (proton donor) is an active-site residue.

It belongs to the glycosyl hydrolase 13 family. GlgB subfamily. Monomer.

The enzyme catalyses Transfers a segment of a (1-&gt;4)-alpha-D-glucan chain to a primary hydroxy group in a similar glucan chain.. It participates in glycan biosynthesis; glycogen biosynthesis. In terms of biological role, catalyzes the formation of the alpha-1,6-glucosidic linkages in glycogen by scission of a 1,4-alpha-linked oligosaccharide from growing alpha-1,4-glucan chains and the subsequent attachment of the oligosaccharide to the alpha-1,6 position. The sequence is that of 1,4-alpha-glucan branching enzyme GlgB from Salmonella typhi.